The primary structure comprises 785 residues: Peptide transporter family 2 (785 aa).

9 helical membrane passes run 46–66 (FSFY…LNFS), 72–92 (VLFH…SILA), 99–119 (FWTI…LAFS), 134–154 (LLGL…VSAF), 167–187 (ISLF…ISMW), 208–228 (FGIP…GSFW), 303–323 (VIVM…QGST), 345–365 (MGVL…SIVY), and 382–402 (AGGG…QLFV). A glycan (N-linked (GlcNAc...) asparagine) is linked at Asn-467. 3 consecutive transmembrane segments (helical) span residues 670-690 (ILWQ…FSIT), 711-731 (WLFT…LNIF), and 738-758 (MFVF…LAVF).

The protein belongs to the major facilitator superfamily. Proton-dependent oligopeptide transporter (POT/PTR) (TC 2.A.17) family. As to expression, expressed in vulval, pharyngeal and anal muscles.

The protein resides in the membrane. Its function is as follows. Proton-dependent uptake of di- or tripeptides, and to a minor extent tetrapeptides. Transport is independent of sodium and chloride ions. Protein shows high affinity to peptide substrates. The protein is Peptide transporter family 2 (pept-2) of Caenorhabditis elegans.